The chain runs to 134 residues: MLSPKRTRFRKQHRGRMKGISSRGNHISFGKYALQALEPAWITSRQIEAGRRAMTRNARRGGKIWVRIFPDKPVTLRPAETRMGSGKGSPEYWVAVVKPGRILYEMGGVTENIARRAISLAASKMPKRTQFIIS.

Over residues M1 to M17 the composition is skewed to basic residues. A disordered region spans residues M1–S22.

The protein belongs to the universal ribosomal protein uL16 family. As to quaternary structure, part of the 50S ribosomal subunit.

The protein resides in the plastid. Its subcellular location is the chloroplast. The sequence is that of Large ribosomal subunit protein uL16c from Solanum tuberosum (Potato).